The sequence spans 451 residues: Tubulin alpha-1B chain (451 aa).

The short motif at methionine 1–cysteine 4 is the MREC motif element. GTP is bound by residues glycine 10, glutamine 11, alanine 12, and glutamine 15. The residue at position 40 (lysine 40) is an N6,N6,N6-trimethyllysine; alternate. Lysine 40 carries the N6-acetyllysine; alternate modification. At serine 48 the chain carries Phosphoserine. 12 residues coordinate GTP: glutamate 71, alanine 99, serine 140, glycine 143, glycine 144, threonine 145, glycine 146, threonine 179, glutamate 183, asparagine 206, tyrosine 224, and asparagine 228. Glutamate 71 serves as a coordination point for Mg(2+). Residue serine 232 is modified to Phosphoserine. Residue leucine 252 participates in GTP binding. Glutamate 254 is a catalytic residue. Tyrosine 282 carries the post-translational modification 3'-nitrotyrosine. Residue lysine 326 forms a Glycyl lysine isopeptide (Lys-Gly) (interchain with G-Cter in ubiquitin) linkage. Omega-N-methylarginine is present on arginine 339. Residue lysine 370 forms a Glycyl lysine isopeptide (Lys-Gly) (interchain with G-Cter in ubiquitin) linkage. Serine 439 bears the Phosphoserine mark. Residues glutamate 443 and glutamate 445 each carry the 5-glutamyl polyglutamate modification. Position 451 is a 3'-nitrotyrosine (tyrosine 451).

The protein belongs to the tubulin family. Heterodimer of alpha- and beta-tubulin. A typical microtubule is a hollow water-filled tube with an outer diameter of 25 nm and an inner diameter of 15 nM. Alpha-beta heterodimers associate head-to-tail to form protofilaments running lengthwise along the microtubule wall with the beta-tubulin subunit facing the microtubule plus end conferring a structural polarity. Microtubules usually have 13 protofilaments but different protofilament numbers can be found in some organisms and specialized cells. Interacts with gamma-tubulin; the interaction allows microtubules to nucleate from the gamma-tubulin ring complex (gTuRC). Nascent microtubule interacts (via alpha-tubulin MREC motif) with TTC5/STRAP; this interaction may result in tubulin mRNA-targeted degradation. Component of sperm flagellar doublet microtubules. Mg(2+) serves as cofactor. Post-translationally, some glutamate residues at the C-terminus are polyglycylated, resulting in polyglycine chains on the gamma-carboxyl group. Glycylation is mainly limited to tubulin incorporated into axonemes (cilia and flagella) whereas glutamylation is prevalent in neuronal cells, centrioles, axonemes, and the mitotic spindle. Both modifications can coexist on the same protein on adjacent residues, and lowering polyglycylation levels increases polyglutamylation, and reciprocally. Cilia and flagella glycylation is required for their stability and maintenance. Flagella glycylation controls sperm motility. Some glutamate residues at the C-terminus are polyglutamylated, resulting in polyglutamate chains on the gamma-carboxyl group. Polyglutamylation plays a key role in microtubule severing by spastin (SPAST). SPAST preferentially recognizes and acts on microtubules decorated with short polyglutamate tails: severing activity by SPAST increases as the number of glutamates per tubulin rises from one to eight, but decreases beyond this glutamylation threshold. Glutamylation is also involved in cilia motility. In terms of processing, acetylation of alpha chains at Lys-40 is located inside the microtubule lumen. This modification has been correlated with increased microtubule stability, intracellular transport and ciliary assembly. Post-translationally, methylation of alpha chains at Lys-40 is found in mitotic microtubules and is required for normal mitosis and cytokinesis contributing to genomic stability. Nitration of Tyr-451 is irreversible and interferes with normal dynein intracellular distribution. In terms of processing, undergoes a tyrosination/detyrosination cycle, the cyclic removal and re-addition of a C-terminal tyrosine residue by the enzymes tubulin tyrosine carboxypeptidase (MATCAP1, VASH1 or VASH2) and tubulin tyrosine ligase (TTL), respectively. Post-translationally, tyrosination promotes microtubule interaction with CAP-Gly domain-containing proteins such as CLIP1, CLIP2 and DCTN1. Tyrosination regulates the initiation of dynein-dynactin motility via interaction with DCTN1, which brings the dynein-dynactin complex into contact with microtubules. In neurons, tyrosinated tubulins mediate the initiation of retrograde vesicle transport. Detyrosination is involved in metaphase plate congression by guiding chromosomes during mitosis: detyrosination promotes interaction with CENPE, promoting pole-proximal transport of chromosomes toward the equator. Detyrosination increases microtubules-dependent mechanotransduction in dystrophic cardiac and skeletal muscle. In cardiomyocytes, detyrosinated microtubules are required to resist to contractile compression during contraction: detyrosination promotes association with desmin (DES) at force-generating sarcomeres, leading to buckled microtubules and mechanical resistance to contraction.

The protein resides in the cytoplasm. It localises to the cytoskeleton. The enzyme catalyses GTP + H2O = GDP + phosphate + H(+). Functionally, tubulin is the major constituent of microtubules, protein filaments consisting of alpha- and beta-tubulin heterodimers. Microtubules grow by the addition of GTP-tubulin dimers to the microtubule end, where a stabilizing cap forms. Below the cap, tubulin dimers are in GDP-bound state, owing to GTPase activity of alpha-tubulin. This chain is Tubulin alpha-1B chain (TUBA1B), found in Pan troglodytes (Chimpanzee).